Reading from the N-terminus, the 267-residue chain is Serine/arginine-rich splicing factor 7 (267 aa).

Residues Thr-40–Gly-113 form the RRM domain. Residue Lys-53 is modified to N6-acetyllysine; alternate. Lys-53 is covalently cross-linked (Glycyl lysine isopeptide (Lys-Gly) (interchain with G-Cter in SUMO2); alternate). The residue at position 61 (Ser-61) is a Phosphoserine. Positions Leu-110–Arg-127 are sufficient for interaction with NXF1. The CCHC-type zinc finger occupies Asp-133–Arg-150. Positions Ser-152–Arg-209 are enriched in basic residues. Residues Ser-152–Asp-267 are disordered. Tandem repeats lie at residues Arg-182–Pro-189, Arg-190–Leu-197, Arg-198–Leu-205, and Arg-206–Ile-213. The 6 X 8 AA repeats of R-R-S-R-S-X-S-X stretch occupies residues Arg-182–Gly-255. Residues Ser-192, Ser-194, and Ser-196 each carry the phosphoserine modification. 5 positions are modified to phosphoserine: Ser-210, Ser-212, Ser-221, Ser-223, and Ser-225. Positions Ser-223–Arg-251 are enriched in basic residues. A 5; approximate repeat occupies Ser-240 to Pro-247. One copy of the 6; approximate repeat lies at Lys-248–Gly-255. A phosphoserine mark is found at Ser-260 and Ser-262.

Belongs to the splicing factor SR family. Found in large molecular weight complexes containing CCNL1 and the p110 isoforms of either CDC2L1 or CDC2L2. Interacts with CCNL2 and CPSF6. Interacts with NXF1. Interacts with YTHDC1. Post-translationally, extensively phosphorylated on serine residues in the RS domain.

Its subcellular location is the nucleus. The protein localises to the cytoplasm. Functionally, required for pre-mRNA splicing. Represses the splicing of MAPT/Tau exon 10. May function as export adapter involved in mRNA nuclear export such as of histone H2A. Binds mRNA which is thought to be transferred to the NXF1-NXT1 heterodimer for export (TAP/NXF1 pathway); enhances NXF1-NXT1 RNA-binding activity. RNA-binding is semi-sequence specific. The sequence is that of Serine/arginine-rich splicing factor 7 (Srsf7) from Mus musculus (Mouse).